The sequence spans 584 residues: UvrABC system protein C (584 aa).

The GIY-YIG domain occupies 14–91; the sequence is HKPGCYLWKD…IKTHLPKYNI (78 aa). Residues 192–227 enclose the UVR domain; that stretch reads DHILMILQTKEQHAVTKLDFENAQKYAEQQKALTSI.

It belongs to the UvrC family. As to quaternary structure, interacts with UvrB in an incision complex.

The protein resides in the cytoplasm. Its function is as follows. The UvrABC repair system catalyzes the recognition and processing of DNA lesions. UvrC both incises the 5' and 3' sides of the lesion. The N-terminal half is responsible for the 3' incision and the C-terminal half is responsible for the 5' incision. The sequence is that of UvrABC system protein C from Ureaplasma parvum serovar 3 (strain ATCC 27815 / 27 / NCTC 11736).